The primary structure comprises 90 residues: Large ribosomal subunit protein bL31B (90 aa).

Belongs to the bacterial ribosomal protein bL31 family. Type B subfamily. Part of the 50S ribosomal subunit.

This chain is Large ribosomal subunit protein bL31B, found in Pseudomonas fluorescens (strain SBW25).